The following is a 220-amino-acid chain: Catechol O-methyltransferase (220 aa).

S-adenosyl-L-methionine is bound by residues V44, E66, 68-69 (GT), S74, E92, and A121. D139 contributes to the a divalent metal cation binding site. D141 is a binding site for S-adenosyl-L-methionine. D165 and N166 together coordinate a divalent metal cation.

This sequence belongs to the class I-like SAM-binding methyltransferase superfamily. Cation-dependent O-methyltransferase family. Homodimer. A divalent metal cation is required as a cofactor.

The enzyme catalyses a catechol + S-adenosyl-L-methionine = a guaiacol + S-adenosyl-L-homocysteine + H(+). Its activity is regulated as follows. Inhibited by EDTA. Its function is as follows. Catechol O-methyltransferase that can use various catechol-like compounds such as gallic acid (GA), 3,4-dihydroxy-5-methoxy-benzoic acid (5OMeBA), protocatechuic acid (PCA), 3,4-dihydroxy-benzaldehyde (DHA), dopamine, caffeic acid (CA), luteolin, quercetin, and 5-hydroxyuridine. The chain is Catechol O-methyltransferase from Mycobacterium tuberculosis (strain ATCC 25618 / H37Rv).